The sequence spans 914 residues: Eukaryotic initiation factor 4F subunit p130 (914 aa).

The segment covering 1 to 12 (MTDQRGPPPPHP) has biased composition (pro residues). Disordered stretches follow at residues 1-84 (MTDQ…YNNR), 128-205 (PPYT…NEAV), 240-351 (ERKK…VNKS), and 457-535 (IARN…LVPS). The segment covering 26–44 (NQYSGANNSQPNNHYNENL) has biased composition (polar residues). The span at 59 to 73 (KNGKYGTNKYNNRNN) shows a compositional bias: low complexity. Position 74 is a phosphoserine (Ser-74). Residues 145-155 (PKTTKIEITTK) show a composition bias toward low complexity. Positions 156 to 195 (TGERLNLKKFHEEKKASKGEEKNDGVEQKSKSGTPFEKEA) are enriched in basic and acidic residues. Phosphothreonine is present on Thr-196. Positions 201–315 (ANEAVKDTLT…TGSVTKSVTF (115 aa)) are interaction with PAB1. The segment covering 240 to 263 (ERKKNGLISETEKKQETSNHDNTD) has biased composition (basic and acidic residues). Polar residues-rich tracts occupy residues 298–325 (SVKT…SSSQ) and 339–348 (ISDTTGGKTV). Thr-301 is modified (phosphothreonine). A compositionally biased stretch (basic and acidic residues) spans 496–529 (RMGDDRRSNRGYTSRKDREKAAEKAEEQAPKEEI). Ser-503 carries the phosphoserine modification. The MIF4G domain occupies 567–810 (ERKMKSLLNK…IDVKELREIK (244 aa)). Residues 833–914 (QLRQKKNSQR…ALMNNDGDSD (82 aa)) form a disordered region. Over residues 841–867 (QRSNSRFNNHNQSNSNRYSSNRRNMQN) the composition is skewed to low complexity. The segment covering 868 to 886 (TQRDSFASTKTGSFRNNQR) has biased composition (polar residues). A Phosphoserine modification is found at Ser-913.

Belongs to the eukaryotic initiation factor 4G family. Component of the eIF4F complex, which composition varies with external and internal environmental conditions. It is composed of at least eIF4A (TIF1/TIF2), eIF4E (TIF45) and eIF4G (TIF4631 or TIF4632). Interacts with PAT1 in a RNA-dependent manner.

The protein resides in the cytoplasm. In terms of biological role, component of the eIF4F complex, which interacts with the mRNA cap structure and serves as an initial point of assembly for the translation apparatus. Stimulates translation by interaction with polyadenylate-binding protein PAB1, bringing the 5'- and 3'-ends of the mRNA in proximity. The formation of this circular mRNP structure appears to be critical for the synergistic effects of the cap and the poly(A) tail in facilitating translation initiation, recycling of ribosomes, and mRNA stability. TIF4632 is probably essential when TIF4631 is missing. In Saccharomyces cerevisiae (strain ATCC 204508 / S288c) (Baker's yeast), this protein is Eukaryotic initiation factor 4F subunit p130.